A 637-amino-acid chain; its full sequence is Chaperone protein HtpG (637 aa).

Residues 1–345 (MSQQETHGFQ…SNDLPLNVSR (345 aa)) are a; substrate-binding. Positions 346–562 (EILQDNHITK…EGEMSSQMIK (217 aa)) are b. Residues 563–637 (LMQAAGQPVP…MNQMLLANLK (75 aa)) are c.

Belongs to the heat shock protein 90 family. As to quaternary structure, homodimer.

It is found in the cytoplasm. In terms of biological role, molecular chaperone. Has ATPase activity. The protein is Chaperone protein HtpG of Shewanella sp. (strain MR-4).